Consider the following 503-residue polypeptide: MRLCGVASAFLSTLILIAHIDASTNLNVSVTDVQNISLPGDQIGNFTQSVSGPPSGDEERTSANSAIRKVDLFVEKLITFQVALRAKINRFLAKLKLAWWRLRNVDPNVTFNKLNLHEADNDILSLDNFHTWVKLVESYNLQHPAEQVSILSKLQEQFGEFEVSIMLEQAKNGADKYTEDIALELQHEQISRWRDDNLSLTALYKALQFGKSEPSLLTGPALRVWNIYTSNIESAETSLFDYLYQTIEDAHLSSLLIAAKQSPETVELATKIQNQLRQKWLEILVPPNLVFQHYKLDTNPTHLLDRPETKLWVRYQKMYWGKTKKEVTLKEMIEDFYKADEIAIIIKSATTDYGKHLAKKLPQCDSKHFKTFHNLTILPLLFVFHYTIGAEDDLSSEKNLISQYNHVPTSCETANCVAGGCLFENCASPLLCRGGLCYFRKCKDATCEGGACIFDNTAEASCPGGGCQFVNVPVTLADGYCDGGGCTLDGDDHPSSLAGSLAE.

The N-terminal stretch at 1–22 is a signal peptide; sequence MRLCGVASAFLSTLILIAHIDA. Residues Asn27, Asn35, and Asn45 are each glycosylated (N-linked (GlcNAc...) asparagine). Residues 57–60 carry the dEER motif; that stretch reads DEER. Residues Asn108, Asn197, and Asn374 are each glycosylated (N-linked (GlcNAc...) asparagine).

The protein belongs to the RxLR effector family.

It is found in the secreted. The protein resides in the host Golgi apparatus. Secreted effector that suppresses pattern-triggered immunity (PTI) in plant host. This is Secreted RxLR effector protein RXLR-C08 from Plasmopara halstedii (Downy mildew of sunflower).